Consider the following 287-residue polypeptide: tRNA uridine(34) hydroxylase (287 aa).

The Rhodanese domain maps to 132-226; sequence QGRPVVMLDT…YFEEVGGAHY (95 aa). Cys-186 serves as the catalytic Cysteine persulfide intermediate.

This sequence belongs to the TrhO family.

It carries out the reaction uridine(34) in tRNA + AH2 + O2 = 5-hydroxyuridine(34) in tRNA + A + H2O. Catalyzes oxygen-dependent 5-hydroxyuridine (ho5U) modification at position 34 in tRNAs. The polypeptide is tRNA uridine(34) hydroxylase (Paraburkholderia phytofirmans (strain DSM 17436 / LMG 22146 / PsJN) (Burkholderia phytofirmans)).